A 678-amino-acid chain; its full sequence is DNA ligase (678 aa).

NAD(+) is bound by residues 35–39 (DEEYD), 84–85 (SL), and E115. The N6-AMP-lysine intermediate role is filled by K117. NAD(+) is bound by residues R138, E172, K288, and K312. The Zn(2+) site is built by C406, C409, C425, and C430. In terms of domain architecture, BRCT spans 589–678 (VQSKILSNLT…IKNLRQQKLF (90 aa)).

It belongs to the NAD-dependent DNA ligase family. LigA subfamily. Mg(2+) is required as a cofactor. Requires Mn(2+) as cofactor.

It catalyses the reaction NAD(+) + (deoxyribonucleotide)n-3'-hydroxyl + 5'-phospho-(deoxyribonucleotide)m = (deoxyribonucleotide)n+m + AMP + beta-nicotinamide D-nucleotide.. In terms of biological role, DNA ligase that catalyzes the formation of phosphodiester linkages between 5'-phosphoryl and 3'-hydroxyl groups in double-stranded DNA using NAD as a coenzyme and as the energy source for the reaction. It is essential for DNA replication and repair of damaged DNA. The chain is DNA ligase from Pseudothermotoga lettingae (strain ATCC BAA-301 / DSM 14385 / NBRC 107922 / TMO) (Thermotoga lettingae).